Consider the following 71-residue polypeptide: Omega-conotoxin SO-3 (71 aa).

A signal peptide spans 1 to 22 (MKLTCMVIVAVLLLTACQLITA). Residues 23-45 (DDSRGTQKHRTLRSKTKLSMSTR) constitute a propeptide that is removed on maturation. Disulfide bonds link cysteine 46–cysteine 61, cysteine 53–cysteine 65, and cysteine 60–cysteine 70. Cysteine amide is present on cysteine 70.

The protein belongs to the conotoxin O1 superfamily. Expressed by the venom duct.

It localises to the secreted. Its function is as follows. Omega-conotoxins act at presynaptic membranes, they bind and block voltage-gated calcium channels (Cav). This peptide selectively targets Cav2.2/CACNA1B (IC(50)=160 nM) voltage-gated calcium channels. When tested in mammals, this toxin displays an analgesic potency similar to MVIIA in a range of acute and chronic pain models in rodents, but has less adverse effects (tremor, diminution of spontaneous locomotor activity and bad coordinated locomotion) compared with identical dosages of MVIIA injected intrathecally. The protein is Omega-conotoxin SO-3 of Conus striatus (Striated cone).